A 245-amino-acid chain; its full sequence is MRVGVLGAKGKVGATMVRAVAAADDLTLSAELDAGDPLSLLTDGNTEVVIDFTHPDVVMGNLEFLIDNGIHAVVGTTGFTAERFQQVESWLVAKPNTSVLIAPNFAIGAVLSMHFAKQAARFFDSAEVIELHHPHKAEAPSGTAARTAKLIAEARKGLPPNPDATSTSLPGARGADVDGIPVHAVRLAGLVAHQEVLFGTEGEILTIRHDSLDRTSFVPGVLLAVRRIAERPGLTVGLEPLLDLH.

NAD(+) is bound by residues 7–12 (GAKGKV), 75–77 (GTT), and 102–105 (APNF). Histidine 132 functions as the Proton donor/acceptor in the catalytic mechanism. Histidine 133 provides a ligand contact to (S)-2,3,4,5-tetrahydrodipicolinate. Lysine 136 acts as the Proton donor in catalysis. A (S)-2,3,4,5-tetrahydrodipicolinate-binding site is contributed by 142–143 (GT).

Belongs to the DapB family.

The protein resides in the cytoplasm. The enzyme catalyses (S)-2,3,4,5-tetrahydrodipicolinate + NAD(+) + H2O = (2S,4S)-4-hydroxy-2,3,4,5-tetrahydrodipicolinate + NADH + H(+). It catalyses the reaction (S)-2,3,4,5-tetrahydrodipicolinate + NADP(+) + H2O = (2S,4S)-4-hydroxy-2,3,4,5-tetrahydrodipicolinate + NADPH + H(+). The protein operates within amino-acid biosynthesis; L-lysine biosynthesis via DAP pathway; (S)-tetrahydrodipicolinate from L-aspartate: step 4/4. Catalyzes the conversion of 4-hydroxy-tetrahydrodipicolinate (HTPA) to tetrahydrodipicolinate. This is 4-hydroxy-tetrahydrodipicolinate reductase from Mycobacterium bovis (strain ATCC BAA-935 / AF2122/97).